The sequence spans 312 residues: Olfactory receptor 1493 (312 aa).

Residues 1-23 are Extracellular-facing; the sequence is MNNKTVITHFLLLGLPIPPEHQQ. N3 carries an N-linked (GlcNAc...) asparagine glycan. Residues 24-48 traverse the membrane as a helical segment; that stretch reads LFFALFLIMYLTTFLGNLLIVVLVQ. Topologically, residues 49 to 55 are cytoplasmic; the sequence is LDSHLHT. The chain crosses the membrane as a helical span at residues 56–77; it reads PMYLFLSNLSFSDLCFSSVTML. Over 78–98 the chain is Extracellular; sequence KLLQNIQSQVPSISYAGCLTQ. C95 and C187 are oxidised to a cystine. Residues 99–118 traverse the membrane as a helical segment; the sequence is IFFFLLFGYLGNFLLVAMAY. Over 119–137 the chain is Cytoplasmic; it reads DRYVAICFPLHYTNIMSHK. A helical transmembrane segment spans residues 138–156; the sequence is LCTCLLLVFWIMTSSHAMM. Residues 157–194 are Extracellular-facing; the sequence is HTLLAARLSFCENNVLLNFFCDLFVLLKLACSDTYVNE. Residues 195–217 traverse the membrane as a helical segment; it reads LMIHIMGVIIIVIPFVLIVISYA. Residues 218-234 are Cytoplasmic-facing; the sequence is KIISSILKVPSTQSIHK. The helical transmembrane segment at 235-258 threads the bilayer; sequence VFSTCGSHLSVVSLFYGTIIGLYL. The Extracellular segment spans residues 259-270; it reads CPSGDNFSLKGS. The chain crosses the membrane as a helical span at residues 271-290; it reads AMAMMYTVVTPMLNPFIYSL. Residues 291-312 lie on the Cytoplasmic side of the membrane; that stretch reads RNRDMKQALIRVTCSKKISLPW.

Belongs to the G-protein coupled receptor 1 family. Olfactory epithelium.

The protein resides in the cell membrane. Odorant receptor. The sequence is that of Olfactory receptor 1493 (Olr1493) from Rattus norvegicus (Rat).